The primary structure comprises 275 residues: 2,3,4,5-tetrahydropyridine-2,6-dicarboxylate N-succinyltransferase (275 aa).

Substrate contacts are provided by Arg106 and Asp143.

It belongs to the transferase hexapeptide repeat family. Homotrimer.

Its subcellular location is the cytoplasm. The catalysed reaction is (S)-2,3,4,5-tetrahydrodipicolinate + succinyl-CoA + H2O = (S)-2-succinylamino-6-oxoheptanedioate + CoA. It functions in the pathway amino-acid biosynthesis; L-lysine biosynthesis via DAP pathway; LL-2,6-diaminopimelate from (S)-tetrahydrodipicolinate (succinylase route): step 1/3. The sequence is that of 2,3,4,5-tetrahydropyridine-2,6-dicarboxylate N-succinyltransferase from Burkholderia ambifaria (strain ATCC BAA-244 / DSM 16087 / CCUG 44356 / LMG 19182 / AMMD) (Burkholderia cepacia (strain AMMD)).